Consider the following 144-residue polypeptide: Large ribosomal subunit protein uL15 (144 aa).

Residues 1 to 54 (MHLNTLKPAEGAKKLAKRKGRGQGSGNGKMAGRGHKGQKSRSGGMPKIGFEGGQ) form a disordered region. Residues 22–31 (GQGSGNGKMA) show a composition bias toward gly residues.

Belongs to the universal ribosomal protein uL15 family. In terms of assembly, part of the 50S ribosomal subunit.

In terms of biological role, binds to the 23S rRNA. The chain is Large ribosomal subunit protein uL15 from Hydrogenovibrio crunogenus (strain DSM 25203 / XCL-2) (Thiomicrospira crunogena).